The primary structure comprises 118 residues: Large ribosomal subunit protein uL18 (118 aa).

The span at 1-10 (MKTTRRDATR) shows a compositional bias: basic and acidic residues. The interval 1-20 (MKTTRRDATRSRHQRVRRKV) is disordered. Over residues 11–20 (SRHQRVRRKV) the composition is skewed to basic residues.

Belongs to the universal ribosomal protein uL18 family. In terms of assembly, part of the 50S ribosomal subunit; part of the 5S rRNA/L5/L18/L25 subcomplex. Contacts the 5S and 23S rRNAs.

This is one of the proteins that bind and probably mediate the attachment of the 5S RNA into the large ribosomal subunit, where it forms part of the central protuberance. The sequence is that of Large ribosomal subunit protein uL18 from Acaryochloris marina (strain MBIC 11017).